Here is a 276-residue protein sequence, read N- to C-terminus: Diaminopimelate epimerase (276 aa).

Substrate-binding residues include asparagine 11, glutamine 44, and asparagine 64. Catalysis depends on cysteine 73, which acts as the Proton donor. Residues 74 to 75 (IN), asparagine 159, asparagine 192, and 210 to 211 (ER) each bind substrate. The active-site Proton acceptor is the cysteine 219. 220-221 (GS) contacts substrate.

This sequence belongs to the diaminopimelate epimerase family. Homodimer.

It is found in the cytoplasm. The catalysed reaction is (2S,6S)-2,6-diaminopimelate = meso-2,6-diaminopimelate. It participates in amino-acid biosynthesis; L-lysine biosynthesis via DAP pathway; DL-2,6-diaminopimelate from LL-2,6-diaminopimelate: step 1/1. In terms of biological role, catalyzes the stereoinversion of LL-2,6-diaminopimelate (L,L-DAP) to meso-diaminopimelate (meso-DAP), a precursor of L-lysine and an essential component of the bacterial peptidoglycan. The protein is Diaminopimelate epimerase of Wigglesworthia glossinidia brevipalpis.